We begin with the raw amino-acid sequence, 1057 residues long: Self-sufficient cytochrome P450 monooxygenase CYP505E3 (1057 aa).

Position 403 (C403) interacts with heme. The tract at residues 465–488 is disordered; it reads PSAAPFSSHARETTNASLPASPGT. The Flavodoxin-like domain occupies 494–634; that stretch reads MYVLYGSNTG…AFEAWETKLW (141 aa). FMN is bound by residues 500–504 and 578–610; these read SNTGT and VFGC…QRLV. In terms of domain architecture, FAD-binding FR-type spans 671–900; the sequence is HDAALGTVIE…RASNAAFHLP (230 aa).

In the N-terminal section; belongs to the cytochrome P450 family. FAD is required as a cofactor. Requires FMN as cofactor. Heme serves as cofactor.

The enzyme catalyses 2 oxidized [cytochrome P450] + NADPH = 2 reduced [cytochrome P450] + NADP(+) + H(+). It carries out the reaction an organic molecule + reduced [NADPH--hemoprotein reductase] + O2 = an alcohol + oxidized [NADPH--hemoprotein reductase] + H2O + H(+). It catalyses the reaction dodecan-1-ol + reduced [NADPH--hemoprotein reductase] + O2 = 1,5-dodecanediol + oxidized [NADPH--hemoprotein reductase] + H2O + H(+). The catalysed reaction is dodecan-1-ol + reduced [NADPH--hemoprotein reductase] + O2 = 1,6-dodecanediol + oxidized [NADPH--hemoprotein reductase] + H2O + H(+). Functionally, self-sufficient cytochrome P450 monooxygenase that catalyzes the regioselective in-chain hydroxylation of fatty alcohols (C9-15) as well as fatty acids (C9-15) at the omega-1 to omega-7 or omega-1 to omega-6 positions, respectively. Is also able to convert naphthalene to 1-naphthol and 1-naphthol further to 1,3-dihydroxynaphthalene. This Phanerodontia chrysosporium (White-rot fungus) protein is Self-sufficient cytochrome P450 monooxygenase CYP505E3.